Here is a 410-residue protein sequence, read N- to C-terminus: Adenosylhomocysteinase (410 aa).

Substrate is bound by residues aspartate 117 and glutamate 142. Residue 143–145 participates in NAD(+) binding; it reads TTT. Lysine 172 and aspartate 176 together coordinate substrate. NAD(+) is bound by residues asparagine 177, 206–211, glutamate 229, 285–287, and asparagine 332; these read GYGYCG and AGH.

The protein belongs to the adenosylhomocysteinase family. NAD(+) serves as cofactor.

It localises to the cytoplasm. It catalyses the reaction S-adenosyl-L-homocysteine + H2O = L-homocysteine + adenosine. The protein operates within amino-acid biosynthesis; L-homocysteine biosynthesis; L-homocysteine from S-adenosyl-L-homocysteine: step 1/1. Functionally, may play a key role in the regulation of the intracellular concentration of adenosylhomocysteine. This chain is Adenosylhomocysteinase, found in Thermoplasma acidophilum (strain ATCC 25905 / DSM 1728 / JCM 9062 / NBRC 15155 / AMRC-C165).